The primary structure comprises 201 residues: 3-isopropylmalate dehydratase small subunit (201 aa).

This sequence belongs to the LeuD family. LeuD type 1 subfamily. Heterodimer of LeuC and LeuD.

It catalyses the reaction (2R,3S)-3-isopropylmalate = (2S)-2-isopropylmalate. The protein operates within amino-acid biosynthesis; L-leucine biosynthesis; L-leucine from 3-methyl-2-oxobutanoate: step 2/4. Catalyzes the isomerization between 2-isopropylmalate and 3-isopropylmalate, via the formation of 2-isopropylmaleate. The protein is 3-isopropylmalate dehydratase small subunit of Salmonella paratyphi A (strain ATCC 9150 / SARB42).